We begin with the raw amino-acid sequence, 413 residues long: Multifunctional CCA protein (413 aa).

Residues G8 and R11 each contribute to the ATP site. Residues G8 and R11 each contribute to the CTP site. Mg(2+) is bound by residues D21 and D23. The ATP site is built by R91, R141, and R144. Positions 91, 141, and 144 each coordinate CTP. The region spanning T230–L331 is the HD domain.

This sequence belongs to the tRNA nucleotidyltransferase/poly(A) polymerase family. Bacterial CCA-adding enzyme type 1 subfamily. Monomer. Can also form homodimers and oligomers. Requires Mg(2+) as cofactor. Ni(2+) is required as a cofactor.

The enzyme catalyses a tRNA precursor + 2 CTP + ATP = a tRNA with a 3' CCA end + 3 diphosphate. It carries out the reaction a tRNA with a 3' CCA end + 2 CTP + ATP = a tRNA with a 3' CCACCA end + 3 diphosphate. Catalyzes the addition and repair of the essential 3'-terminal CCA sequence in tRNAs without using a nucleic acid template. Adds these three nucleotides in the order of C, C, and A to the tRNA nucleotide-73, using CTP and ATP as substrates and producing inorganic pyrophosphate. tRNA 3'-terminal CCA addition is required both for tRNA processing and repair. Also involved in tRNA surveillance by mediating tandem CCA addition to generate a CCACCA at the 3' terminus of unstable tRNAs. While stable tRNAs receive only 3'-terminal CCA, unstable tRNAs are marked with CCACCA and rapidly degraded. The chain is Multifunctional CCA protein from Verminephrobacter eiseniae (strain EF01-2).